Here is a 63-residue protein sequence, read N- to C-terminus: Protein DsrB (63 aa).

It belongs to the DsrB family.

The polypeptide is Protein DsrB (Yersinia enterocolitica serotype O:8 / biotype 1B (strain NCTC 13174 / 8081)).